Here is a 68-residue protein sequence, read N- to C-terminus: Neuronal regeneration-related protein (68 aa).

Positions 22–54 (EGRLPKGRLPVPKEVNRKKNDETNAASLTPLGS) are disordered. Polar residues predominate over residues 44-54 (TNAASLTPLGS). Serine 59 carries the post-translational modification Phosphoserine.

In terms of assembly, interacts with the latency-associated peptides (LAP) of TGFB1 and TGFB2; the interaction results in a decrease in TGFB autoinduction. Interacts with FLNA. Phosphorylated on Ser-59. Phosphorylation decreases stability and activity. Expressed in lung (at protein level).

It localises to the cytoplasm. May have roles in neural function. Ectopic expression augments motility of gliomas. Also promotes axonal regeneration. May also have functions in cellular differentiation. Induces differentiation of fibroblast into myofibroblast and myofibroblast ameboid migration. Increases retinoic-acid regulation of lipid-droplet biogenesis. Down-regulates the expression of TGFB1 and TGFB2 but not of TGFB3. May play a role in the regulation of alveolar generation. The protein is Neuronal regeneration-related protein (NREP) of Homo sapiens (Human).